Here is a 267-residue protein sequence, read N- to C-terminus: MLTYPDIDPVAIALGPFKVHWYGLMYVVGFVGAWWLGRRRADRLGVQPDAIGDLLFYGALGVVLGGRVGYALFYGFERLAADPLWIFQVWDGGMSFHGGLIGVLIAAWLFARKHRLAFFQLTDFVAPLVPLGLGAGRIGNFINHELPGRVTDVPWALVYPGLGPEGRHPSPLYEFALEGVVMFVVLWWVSSRPRRRGMISGLFLLLYAVFRFSVEFVRRPDPQLGFIAFDWLTMGQLLTVPMALAGIALCVWSRRQPVDDARMQAAT.

Helical transmembrane passes span 10-30 (VAIALGPFKVHWYGLMYVVGF), 54-74 (LLFYGALGVVLGGRVGYALFY), 90-110 (WDGGMSFHGGLIGVLIAAWLF), and 116-136 (LAFFQLTDFVAPLVPLGLGAG). Arg-137 is an a 1,2-diacyl-sn-glycero-3-phospho-(1'-sn-glycerol) binding site. Transmembrane regions (helical) follow at residues 169 to 189 (PSPLYEFALEGVVMFVVLWWV), 197 to 217 (GMISGLFLLLYAVFRFSVEFV), and 231 to 251 (WLTMGQLLTVPMALAGIALCV).

This sequence belongs to the Lgt family.

The protein resides in the cell inner membrane. It catalyses the reaction L-cysteinyl-[prolipoprotein] + a 1,2-diacyl-sn-glycero-3-phospho-(1'-sn-glycerol) = an S-1,2-diacyl-sn-glyceryl-L-cysteinyl-[prolipoprotein] + sn-glycerol 1-phosphate + H(+). Its pathway is protein modification; lipoprotein biosynthesis (diacylglyceryl transfer). In terms of biological role, catalyzes the transfer of the diacylglyceryl group from phosphatidylglycerol to the sulfhydryl group of the N-terminal cysteine of a prolipoprotein, the first step in the formation of mature lipoproteins. In Chromohalobacter salexigens (strain ATCC BAA-138 / DSM 3043 / CIP 106854 / NCIMB 13768 / 1H11), this protein is Phosphatidylglycerol--prolipoprotein diacylglyceryl transferase.